A 173-amino-acid polypeptide reads, in one-letter code: Signal peptidase complex catalytic subunit sec11 (173 aa).

At Met1 to Gln15 the chain is on the cytoplasmic side. Residues Ile16–Val36 form a helical; Signal-anchor for type II membrane protein membrane-spanning segment. Residues Ser37 to Glu173 are Lumenal-facing. Residues Ser50, His89, and Asp115 each act as charge relay system in the active site. Positions Val159–Leu170 are C-terminal short (CTS) helix.

The protein belongs to the peptidase S26B family. In terms of assembly, component of the signal peptidase complex (SPC) composed of a catalytic subunit SEC11 and three accessory subunits SPC1, SPC2 and SPC3. The complex induces a local thinning of the ER membrane which is used to measure the length of the signal peptide (SP) h-region of protein substrates. This ensures the selectivity of the complex towards h-regions shorter than 18-20 amino acids. SPC associates with the translocon complex.

The protein resides in the endoplasmic reticulum membrane. The enzyme catalyses Cleavage of hydrophobic, N-terminal signal or leader sequences from secreted and periplasmic proteins.. In terms of biological role, catalytic component of the signal peptidase complex (SPC) which catalyzes the cleavage of N-terminal signal sequences from nascent proteins as they are translocated into the lumen of the endoplasmic reticulum. Specifically cleaves N-terminal signal peptides that contain a hydrophobic alpha-helix (h-region) shorter than 18-20 amino acids. This chain is Signal peptidase complex catalytic subunit sec11 (sec11), found in Pyrenophora tritici-repentis (strain Pt-1C-BFP) (Wheat tan spot fungus).